We begin with the raw amino-acid sequence, 177 residues long: CASP-like protein 5A2 (177 aa).

The Cytoplasmic segment spans residues 1–36; it reads MNASHPAVHPVGVPPAVAGQLPPRMRMKEIQGMPGT. Residues 37-57 traverse the membrane as a helical segment; it reads IGGLLLRLGQFCFALVAFSIM. Topologically, residues 58–68 are extracellular; that stretch reads VSIENFSTVTA. Asn-62 carries N-linked (GlcNAc...) asparagine glycosylation. A helical membrane pass occupies residues 69–89; the sequence is FCYLVAATVLQCLWSLALAII. Topologically, residues 90 to 103 are cytoplasmic; the sequence is DGYALLVKRSLRNS. Residues 104 to 124 form a helical membrane-spanning segment; the sequence is LLVSLLVVGDGVTATLTFAAA. Topologically, residues 125–153 are extracellular; it reads CASAGITVLIGNDLRQCKENHCARYETAT. A helical membrane pass occupies residues 154–174; sequence ALAFLSWFMVSLSFILTFWLL. The Cytoplasmic portion of the chain corresponds to 175-177; sequence ATR.

The protein belongs to the Casparian strip membrane proteins (CASP) family. In terms of assembly, homodimer and heterodimers.

Its subcellular location is the cell membrane. This is CASP-like protein 5A2 from Ginkgo biloba (Ginkgo).